Reading from the N-terminus, the 452-residue chain is Coiled-coil domain-containing protein 71 (452 aa).

The tract at residues 81–106 is disordered; that stretch reads PSQTKLQARAPTPAATSPPASAPQTA. Low complexity predominate over residues 87–106; the sequence is QARAPTPAATSPPASAPQTA. A Phosphoserine modification is found at S129. Disordered regions lie at residues 209 to 256 and 322 to 404; these read PLKV…GLQS and AREV…LGPG. Residues 279 to 344 adopt a coiled-coil conformation; it reads KAAQAKAACA…QAKAKVARTQ (66 aa). The segment covering 332 to 344 has biased composition (low complexity); sequence KAVQAKAKVARTQ. A compositionally biased stretch (basic and acidic residues) spans 377 to 386; sequence RTEEAKDLSP.

The sequence is that of Coiled-coil domain-containing protein 71 (CCDC71) from Bos taurus (Bovine).